Consider the following 103-residue polypeptide: N(4)-acetylcytidine amidohydrolase (103 aa).

Residues 6-101 form the ASCH domain; sequence ITFFQRFQDD…QTQFYVIEFK (96 aa). The Proton acceptor role is filled by Lys-21. Thr-24 acts as the Nucleophile in catalysis. The Proton donor role is filled by Glu-74.

Belongs to the N(4)-acetylcytidine amidohydrolase family.

It carries out the reaction N(4)-acetylcytidine + H2O = cytidine + acetate + H(+). The catalysed reaction is N(4)-acetyl-2'-deoxycytidine + H2O = 2'-deoxycytidine + acetate + H(+). It catalyses the reaction N(4)-acetylcytosine + H2O = cytosine + acetate + H(+). Catalyzes the hydrolysis of N(4)-acetylcytidine (ac4C). The sequence is that of N(4)-acetylcytidine amidohydrolase (yqfB) from Escherichia coli (strain K12 / MC4100 / BW2952).